The chain runs to 437 residues: ATP-dependent protease ATPase subunit HslU (437 aa).

Residues Val-18, 60 to 65, Asp-250, Glu-315, and Arg-387 contribute to the ATP site; that span reads GCGKTE.

It belongs to the ClpX chaperone family. HslU subfamily. A double ring-shaped homohexamer of HslV is capped on each side by a ring-shaped HslU homohexamer. The assembly of the HslU/HslV complex is dependent on binding of ATP.

Its subcellular location is the cytoplasm. ATPase subunit of a proteasome-like degradation complex; this subunit has chaperone activity. The binding of ATP and its subsequent hydrolysis by HslU are essential for unfolding of protein substrates subsequently hydrolyzed by HslV. HslU recognizes the N-terminal part of its protein substrates and unfolds these before they are guided to HslV for hydrolysis. The polypeptide is ATP-dependent protease ATPase subunit HslU (Methylorubrum extorquens (strain PA1) (Methylobacterium extorquens)).